A 354-amino-acid polypeptide reads, in one-letter code: D-alanine--D-alanine ligase (354 aa).

In terms of domain architecture, ATP-grasp spans 133–338 (KHLFAQAGLP…YSDLIEQLVE (206 aa)). 166 to 221 (EKELGYPCFVKPANLGSSVGISKCRNREELEKAFELAFEYDRKIVVEEGIAGREIE) is a binding site for ATP. Mg(2+) is bound by residues Asp-292, Glu-305, and Asn-307.

The protein belongs to the D-alanine--D-alanine ligase family. It depends on Mg(2+) as a cofactor. Mn(2+) serves as cofactor.

The protein resides in the cytoplasm. It carries out the reaction 2 D-alanine + ATP = D-alanyl-D-alanine + ADP + phosphate + H(+). It participates in cell wall biogenesis; peptidoglycan biosynthesis. Functionally, cell wall formation. This chain is D-alanine--D-alanine ligase, found in Bacillus velezensis (strain DSM 23117 / BGSC 10A6 / LMG 26770 / FZB42) (Bacillus amyloliquefaciens subsp. plantarum).